The following is a 268-amino-acid chain: Large ribosomal subunit protein mL46 (268 aa).

The transit peptide at M1–S25 directs the protein to the mitochondrion.

It belongs to the mitochondrion-specific ribosomal protein mL46 family. Component of the mitochondrial large ribosomal subunit (mt-LSU). Mature yeast 74S mitochondrial ribosomes consist of a small (37S) and a large (54S) subunit. The 37S small subunit contains a 15S ribosomal RNA (15S mt-rRNA) and at least 32 different proteins. The 54S large subunit contains a 21S rRNA (21S mt-rRNA) and at least 45 different proteins.

Its subcellular location is the mitochondrion. In terms of biological role, component of the mitochondrial ribosome (mitoribosome), a dedicated translation machinery responsible for the synthesis of mitochondrial genome-encoded proteins, including at least some of the essential transmembrane subunits of the mitochondrial respiratory chain. The mitoribosomes are attached to the mitochondrial inner membrane and translation products are cotranslationally integrated into the membrane. This Schizosaccharomyces pombe (strain 972 / ATCC 24843) (Fission yeast) protein is Large ribosomal subunit protein mL46 (mrpl17).